The following is a 274-amino-acid chain: MTLQEDIIRQLGVKAVIDPKQEIRQSVDFLKAYLLKHPFLKTYVLGISGGQDSSLAGKLAQMAIEELRAETGDEQYQFIAVRLPYGVQADEADAQKALAFIQPDQALTVNIKEAVDGQLRALETAGLEISDFNKGNIKARQRMISQYAIAGQTAGAVIGTDHAAENVMGFFTKFGDGGADILPLFRLTKRQGKALLKALKADPSLYEKVPTADLEDKKPGLADEVALGVSYQEIDDYLEGHTISAEAQARIEDWWHKGQHKRHLPITIFDDFWK.

46–53 contacts ATP; the sequence is GISGGQDS. A Mg(2+)-binding site is contributed by Asp52. Residue Arg140 participates in deamido-NAD(+) binding. Thr160 is a binding site for ATP. Glu165 serves as a coordination point for Mg(2+). The deamido-NAD(+) site is built by Lys173 and Asp180. ATP-binding residues include Lys189 and Thr211. A deamido-NAD(+)-binding site is contributed by 260 to 261; that stretch reads HK.

The protein belongs to the NAD synthetase family. Homodimer.

It carries out the reaction deamido-NAD(+) + NH4(+) + ATP = AMP + diphosphate + NAD(+) + H(+). The protein operates within cofactor biosynthesis; NAD(+) biosynthesis; NAD(+) from deamido-NAD(+) (ammonia route): step 1/1. Catalyzes the ATP-dependent amidation of deamido-NAD to form NAD. Uses ammonia as a nitrogen source. The polypeptide is NH(3)-dependent NAD(+) synthetase (Streptococcus equi subsp. zooepidemicus (strain H70)).